We begin with the raw amino-acid sequence, 336 residues long: Nucleoid-associated protein Spro_3255 (336 aa).

Belongs to the YejK family.

It localises to the cytoplasm. It is found in the nucleoid. This chain is Nucleoid-associated protein Spro_3255, found in Serratia proteamaculans (strain 568).